Consider the following 146-residue polypeptide: Antiholin-like protein LrgA (146 aa).

The next 4 membrane-spanning stretches (helical) occupy residues 7 to 29 (YGFL…IAAI), 34 to 53 (IPAS…LKVI), 65 to 87 (LTSL…LGVM), and 97 to 119 (VILL…ILSL).

Belongs to the CidA/LrgA family. LrgA subfamily.

The protein resides in the cell membrane. Inhibits the expression or activity of extracellular murein hydrolases by interacting, possibly with LrgB, with the holin-like protein CidA. The LrgAB and CidA proteins may affect the proton motive force of the membrane. May be involved in programmed cell death (PCD), possibly triggering PCD in response to antibiotics and environmental stresses. The polypeptide is Antiholin-like protein LrgA (Bacillus subtilis (strain 168)).